The following is a 246-amino-acid chain: 5-oxoprolinase subunit A (246 aa).

The protein belongs to the LamB/PxpA family. In terms of assembly, forms a complex composed of PxpA, PxpB and PxpC.

It catalyses the reaction 5-oxo-L-proline + ATP + 2 H2O = L-glutamate + ADP + phosphate + H(+). Catalyzes the cleavage of 5-oxoproline to form L-glutamate coupled to the hydrolysis of ATP to ADP and inorganic phosphate. This is 5-oxoprolinase subunit A from Cupriavidus necator (strain ATCC 17699 / DSM 428 / KCTC 22496 / NCIMB 10442 / H16 / Stanier 337) (Ralstonia eutropha).